We begin with the raw amino-acid sequence, 205 residues long: NADH dehydrogenase (205 aa).

Residues 17-21 (RRSIR), Gln73, 158-159 (LG), and Arg195 each bind FMN.

The protein belongs to the nitroreductase family. Homodimer. The cofactor is FMN.

It carries out the reaction a ubiquinone + NADH + 5 H(+)(in) = a ubiquinol + NAD(+) + 4 H(+)(out). In terms of biological role, can oxidize either NADH or NADPH with a preference for NADH. Can catalyze electron transfer from NADH to various electron acceptors which include, in addition to molecular oxygen, cytochrome c, 2,6 dichlorphenolindophenol, methylene blue, ferricyanide or P-nitroblue tetrazolium. The sequence is that of NADH dehydrogenase (nox) from Thermus thermophilus (strain ATCC 27634 / DSM 579 / HB8).